A 429-amino-acid polypeptide reads, in one-letter code: MKGTIFAVALNHRSQLDAWQEAFQQSPYKAPPKTAVWFIKPRNTVIGCGEPIPFPQGEKVLSGATVALIVGKTATKVREEDAAEYIAGYALANDVSLPEESFYRPAIKAKCRDGFCPIGETVALSNVDNLTIYTEINGRPADHWNTADLQRNAAQLLSALSEFATLNPGDAILLGTPQARVEIQPGDRVRVLAEGFPPLENPVVDEREVTTRKSFPTLPHPHGTLFALGLNYADHASELEFKPPEEPLVFLKAPNTLTGDNQTSVRPNNIEYMHYEAELVVVIGKQARNVSEADAMDYVAGYTVCNDYAIRDYLENYYRPNLRVKSRDGLTPMLSTIVPKEAIPDPHNLTLRTFVNGELRQQGTTADLIFSVPFLIAYLSEFMTLNPGDMIATGTPKGLSDVVPGDEVVVEVEGVGRLVNRIVSEETAK.

2 Approximate repeats span residues 1-215 (MKGT…RKSF) and 216-429 (PTLP…ETAK). Positions 276, 278, and 307 each coordinate a divalent metal cation.

The protein belongs to the FAH family. In terms of assembly, monomer. Requires Mg(2+) as cofactor.

It carries out the reaction (2E,4Z)-5-hydroxypenta-2,4-diene-1,2,5-tricarboxylate = (3E,5R)-5-carboxy-2-oxohept-3-enedioate. It catalyses the reaction (3E,5R)-5-carboxy-2-oxohept-3-enedioate + H(+) = (4Z)-2-oxohept-4-enedioate + CO2. The protein operates within aromatic compound metabolism; 4-hydroxyphenylacetate degradation; pyruvate and succinate semialdehyde from 4-hydroxyphenylacetate: step 4/7. Its pathway is aromatic compound metabolism; 4-hydroxyphenylacetate degradation; pyruvate and succinate semialdehyde from 4-hydroxyphenylacetate: step 5/7. In terms of biological role, decarboxylates OPET (5-oxo-pent-3-ene-1,2,5-tricarboxylic acid) into HHDD (2-hydroxy-hept-2,4-diene-1,7-dioate) and isomerizes it to OHED (2-oxo-hept-3-ene-1,7-dioate). This chain is 4-hydroxyphenylacetate degradation bifunctional isomerase/decarboxylase (hpaG), found in Escherichia coli.